A 473-amino-acid chain; its full sequence is Sarcalumenin (473 aa).

The signal sequence occupies residues 1-20 (MRALVLLGCLLASLLFSGQA). Residues 90–331 (ITSKPMVLFL…IENRLENKIA (242 aa)) enclose the Dynamin-type G domain. Residues 100–107 (GPWSVGKS) are G1 motif. The tract at residues 128-129 (EP) is G2 motif. Positions 190–193 (DTPG) are G3 motif. The G4 motif stretch occupies residues 255–258 (NKAD). Residue proline 278 is a region of interest, G5 motif. Asparagine 281 and asparagine 389 each carry an N-linked (GlcNAc...) asparagine glycan.

It belongs to the TRAFAC class dynamin-like GTPase superfamily. Dynamin/Fzo/YdjA family. Post-translationally, N-glycosylated.

The protein resides in the sarcoplasmic reticulum lumen. The protein localises to the sarcoplasmic reticulum membrane. The chain is Sarcalumenin (SRL) from Homo sapiens (Human).